The following is a 279-amino-acid chain: Tryptophan 2,3-dioxygenase (279 aa).

Substrate is bound by residues 48 to 52, Tyr110, and Arg114; that span reads FIIQH. Position 237 (His237) interacts with heme. A substrate-binding site is contributed by Thr251.

This sequence belongs to the tryptophan 2,3-dioxygenase family. Homotetramer. It depends on heme as a cofactor.

It catalyses the reaction L-tryptophan + O2 = N-formyl-L-kynurenine. The protein operates within amino-acid degradation; L-tryptophan degradation via kynurenine pathway; L-kynurenine from L-tryptophan: step 1/2. Heme-dependent dioxygenase that catalyzes the oxidative cleavage of the L-tryptophan (L-Trp) pyrrole ring and converts L-tryptophan to N-formyl-L-kynurenine. Catalyzes the oxidative cleavage of the indole moiety. This is Tryptophan 2,3-dioxygenase from Bradyrhizobium sp. (strain ORS 278).